The primary structure comprises 199 residues: Holliday junction branch migration complex subunit RuvA (199 aa).

The domain I stretch occupies residues 1–65 (MIGWLHGQII…EDALLLYGFL (65 aa)). Residues 66–144 (DKEERSLFRS…QFDGSVSDTF (79 aa)) form a domain II region. Residues 144 to 148 (FQKQA) are flexible linker. Positions 149–199 (GSTHSQQEAISALEALGYKPQEAWKVVNKIDNGNKSCEQLIREALQILSSR) are domain III.

This sequence belongs to the RuvA family. In terms of assembly, homotetramer. Forms an RuvA(8)-RuvB(12)-Holliday junction (HJ) complex. HJ DNA is sandwiched between 2 RuvA tetramers; dsDNA enters through RuvA and exits via RuvB. An RuvB hexamer assembles on each DNA strand where it exits the tetramer. Each RuvB hexamer is contacted by two RuvA subunits (via domain III) on 2 adjacent RuvB subunits; this complex drives branch migration. In the full resolvosome a probable DNA-RuvA(4)-RuvB(12)-RuvC(2) complex forms which resolves the HJ.

The protein resides in the cytoplasm. The RuvA-RuvB-RuvC complex processes Holliday junction (HJ) DNA during genetic recombination and DNA repair, while the RuvA-RuvB complex plays an important role in the rescue of blocked DNA replication forks via replication fork reversal (RFR). RuvA specifically binds to HJ cruciform DNA, conferring on it an open structure. The RuvB hexamer acts as an ATP-dependent pump, pulling dsDNA into and through the RuvAB complex. HJ branch migration allows RuvC to scan DNA until it finds its consensus sequence, where it cleaves and resolves the cruciform DNA. This Legionella pneumophila (strain Paris) protein is Holliday junction branch migration complex subunit RuvA.